A 156-amino-acid chain; its full sequence is 6,7-dimethyl-8-ribityllumazine synthase (156 aa).

5-amino-6-(D-ribitylamino)uracil is bound by residues F24, 56-58 (SFE), and 80-82 (AVV). 85-86 (ET) lines the (2S)-2-hydroxy-3-oxobutyl phosphate pocket. The Proton donor role is filled by H88. F113 contributes to the 5-amino-6-(D-ribitylamino)uracil binding site. Residue R127 coordinates (2S)-2-hydroxy-3-oxobutyl phosphate.

Belongs to the DMRL synthase family.

The enzyme catalyses (2S)-2-hydroxy-3-oxobutyl phosphate + 5-amino-6-(D-ribitylamino)uracil = 6,7-dimethyl-8-(1-D-ribityl)lumazine + phosphate + 2 H2O + H(+). It functions in the pathway cofactor biosynthesis; riboflavin biosynthesis; riboflavin from 2-hydroxy-3-oxobutyl phosphate and 5-amino-6-(D-ribitylamino)uracil: step 1/2. In terms of biological role, catalyzes the formation of 6,7-dimethyl-8-ribityllumazine by condensation of 5-amino-6-(D-ribitylamino)uracil with 3,4-dihydroxy-2-butanone 4-phosphate. This is the penultimate step in the biosynthesis of riboflavin. The polypeptide is 6,7-dimethyl-8-ribityllumazine synthase (Thermococcus kodakarensis (strain ATCC BAA-918 / JCM 12380 / KOD1) (Pyrococcus kodakaraensis (strain KOD1))).